The chain runs to 131 residues: Small ribosomal subunit protein uS11 (131 aa).

The protein belongs to the universal ribosomal protein uS11 family. In terms of assembly, part of the 30S ribosomal subunit. Interacts with proteins S7 and S18. Binds to IF-3.

Located on the platform of the 30S subunit, it bridges several disparate RNA helices of the 16S rRNA. Forms part of the Shine-Dalgarno cleft in the 70S ribosome. The polypeptide is Small ribosomal subunit protein uS11 (Bacillus licheniformis (strain ATCC 14580 / DSM 13 / JCM 2505 / CCUG 7422 / NBRC 12200 / NCIMB 9375 / NCTC 10341 / NRRL NRS-1264 / Gibson 46)).